The chain runs to 563 residues: Lipase 2 (563 aa).

The N-terminal stretch at 1-19 (MVSKSLFLAAAVNLAGVLA) is a signal peptide. The residue at position 20 (glutamine 20) is a Pyrrolidone carboxylic acid. Cysteine 80 and cysteine 124 are disulfide-bonded. Serine 236 functions as the Acyl-ester intermediate in the catalytic mechanism. Residues cysteine 295 and cysteine 307 are joined by a disulfide bond. N-linked (GlcNAc...) asparagine glycosylation is present at asparagine 302. Glutamate 373 serves as the catalytic Charge relay system. A glycan (N-linked (GlcNAc...) asparagine) is linked at asparagine 383. The active-site Charge relay system is the histidine 482.

It belongs to the type-B carboxylesterase/lipase family. In terms of assembly, monomer.

Its subcellular location is the secreted. It catalyses the reaction a triacylglycerol + H2O = a diacylglycerol + a fatty acid + H(+). Hydrolyzes all ester bonds in triglyceride and displays a high affinity for triolein. For unsaturated substrates having long fatty acyl chains (C18:2 cis-9, cis-12 and C18:3 cis-9, cis-12, cis-15) GCL I shows higher specific activity than GCL II, whereas GCL II shows higher specific activity against saturated substrates having short fatty acid chains (C8, C10, C12 and C14). This is Lipase 2 (LIP2) from Geotrichum candidum (Oospora lactis).